The following is a 274-amino-acid chain: Nitrogenase iron protein (274 aa).

An ATP-binding site is contributed by 8-15 (GKGGIGKS). Position 94 (cysteine 94) interacts with [4Fe-4S] cluster. The residue at position 97 (arginine 97) is an ADP-ribosylarginine; by dinitrogenase reductase ADP-ribosyltransferase. Position 131 (cysteine 131) interacts with [4Fe-4S] cluster.

It belongs to the NifH/BchL/ChlL family. As to quaternary structure, homodimer. The cofactor is [4Fe-4S] cluster. Post-translationally, the reversible ADP-ribosylation of Arg-97 inactivates the nitrogenase reductase and regulates nitrogenase activity.

It carries out the reaction N2 + 8 reduced [2Fe-2S]-[ferredoxin] + 16 ATP + 16 H2O = H2 + 8 oxidized [2Fe-2S]-[ferredoxin] + 2 NH4(+) + 16 ADP + 16 phosphate + 6 H(+). Its function is as follows. The key enzymatic reactions in nitrogen fixation are catalyzed by the nitrogenase complex, which has 2 components: the iron protein and the molybdenum-iron protein. This chain is Nitrogenase iron protein, found in Chlorobium phaeobacteroides (strain BS1).